Here is a 503-residue protein sequence, read N- to C-terminus: GMP synthase [glutamine-hydrolyzing] (503 aa).

The Glutamine amidotransferase type-1 domain occupies 1–189 (MVLVLDFGSQ…FLELAGAKRD (189 aa)). C78 serves as the catalytic Nucleophile. Catalysis depends on residues H164 and E166. Positions 190-378 (WTPEHVLEEL…LGLPDTLRLR (189 aa)) constitute a GMPS ATP-PPase domain. 217–223 (SGGVDSS) lines the ATP pocket.

Homodimer.

The enzyme catalyses XMP + L-glutamine + ATP + H2O = GMP + L-glutamate + AMP + diphosphate + 2 H(+). Its pathway is purine metabolism; GMP biosynthesis; GMP from XMP (L-Gln route): step 1/1. In terms of biological role, catalyzes the synthesis of GMP from XMP. In Thermus thermophilus (strain ATCC BAA-163 / DSM 7039 / HB27), this protein is GMP synthase [glutamine-hydrolyzing].